The following is an 82-amino-acid chain: Small ribosomal subunit protein uS17 (82 aa).

Belongs to the universal ribosomal protein uS17 family. In terms of assembly, part of the 30S ribosomal subunit.

Functionally, one of the primary rRNA binding proteins, it binds specifically to the 5'-end of 16S ribosomal RNA. The sequence is that of Small ribosomal subunit protein uS17 from Nitrobacter hamburgensis (strain DSM 10229 / NCIMB 13809 / X14).